We begin with the raw amino-acid sequence, 65 residues long: Small ribosomal subunit protein eS17 (65 aa).

This sequence belongs to the eukaryotic ribosomal protein eS17 family.

In Methanobrevibacter smithii (strain ATCC 35061 / DSM 861 / OCM 144 / PS), this protein is Small ribosomal subunit protein eS17.